Reading from the N-terminus, the 746-residue chain is Protein C-mannosyl-transferase DPY19L1 (746 aa).

A disordered region spans residues 1 to 68 (MVLQARSKHR…RAGTAAPAPD (68 aa)). 2 positions are modified to phosphoserine: serine 28 and serine 31. Residues 59–68 (RAGTAAPAPD) are compositionally biased toward low complexity. Transmembrane regions (helical) follow at residues 137–159 (LYYSYFKTIVEAPSFLNGVWMIM), 227–247 (ACFYVAVIFMLNGLMMALFFI), 257–279 (LGGVVTVLCFFFNHGECTRVMWT), 307–325 (LCRGSLIALCISNVLFMLP), 331–350 (FVLLTQIASLFAVYVVGYID), 357–374 (IIYMHMISLVLCFVLMFG), 380–396 (TSYYASSLVIIWGMLAM), 405–425 (VSELSLWVIQGCGWLFGTVIL), 481–501 (LLLPVVLVTVAAIVRKIFNDM), 520–540 (GELVYHALQLLAYTALGVLIM), and 562–582 (LFGWLFGKVHPGAVVFAILAA).

It belongs to the dpy-19 family.

The protein resides in the endoplasmic reticulum membrane. The catalysed reaction is L-tryptophyl-[protein] + a di-trans,poly-cis-dolichyl beta-D-mannosyl phosphate = C-alpha-D-mannosyl-L-tryptophyl-[protein] + a di-trans,poly-cis-dolichyl phosphate + H(+). Its pathway is protein modification; protein glycosylation. Its function is as follows. C-mannosyltransferase that mediates the C-mannosylation tryptophan residues on target proteins. The reaction occurs on the luminal side of the endoplasmic reticulum and involves the transfer of a mannose unit from a dolichylphosphate mannose (Dol-P-Man) donor to an acceptor protein containing a WxxW consensus sequence. C-mannosylates the first two tryptophans in the WxxWxxWxxC sequence motif in thrombospondin (TSP) type-1 repeats of UNC5A. Regulates neurite extension during development. The chain is Protein C-mannosyl-transferase DPY19L1 (Dpy19l1) from Mus musculus (Mouse).